Here is a 240-residue protein sequence, read N- to C-terminus: MTASERPHVSAAMTELDHPALYRLMTWLSPAFPVGGFAYSSGIEWAVEAGDVDDAASLRGWLSTMLTDGSGFCDAVFLVHAHRAMELGDIDRLREVAELAAAFVPSRERQLETTAQGRAFIEIARSAWNSPGLDDAVSQCEAMVYPVAVGVVGAAHGIQSSLLLHAYLHAVTSNWISAGSRLIPLGQTDSQRVLAALEPVVTATAVRAISASLDDIGSATFRADLASLRHETQYTRLFRS.

Belongs to the UreF family. As to quaternary structure, ureD, UreF and UreG form a complex that acts as a GTP-hydrolysis-dependent molecular chaperone, activating the urease apoprotein by helping to assemble the nickel containing metallocenter of UreC. The UreE protein probably delivers the nickel.

The protein resides in the cytoplasm. In terms of biological role, required for maturation of urease via the functional incorporation of the urease nickel metallocenter. The polypeptide is Urease accessory protein UreF (Bradyrhizobium sp. (strain BTAi1 / ATCC BAA-1182)).